A 206-amino-acid polypeptide reads, in one-letter code: UPF0301 protein Msil_1255 (206 aa).

It belongs to the UPF0301 (AlgH) family.

This Methylocella silvestris (strain DSM 15510 / CIP 108128 / LMG 27833 / NCIMB 13906 / BL2) protein is UPF0301 protein Msil_1255.